Consider the following 428-residue polypeptide: Serine--tRNA ligase (428 aa).

235–237 serves as a coordination point for L-serine; sequence TAE. 266-268 provides a ligand contact to ATP; it reads RSE. An L-serine-binding site is contributed by E289. 353 to 356 is an ATP binding site; the sequence is EISS. S389 is a binding site for L-serine.

Belongs to the class-II aminoacyl-tRNA synthetase family. Type-1 seryl-tRNA synthetase subfamily. Homodimer. The tRNA molecule binds across the dimer.

It localises to the cytoplasm. It carries out the reaction tRNA(Ser) + L-serine + ATP = L-seryl-tRNA(Ser) + AMP + diphosphate + H(+). The catalysed reaction is tRNA(Sec) + L-serine + ATP = L-seryl-tRNA(Sec) + AMP + diphosphate + H(+). Its pathway is aminoacyl-tRNA biosynthesis; selenocysteinyl-tRNA(Sec) biosynthesis; L-seryl-tRNA(Sec) from L-serine and tRNA(Sec): step 1/1. Its function is as follows. Catalyzes the attachment of serine to tRNA(Ser). Is also able to aminoacylate tRNA(Sec) with serine, to form the misacylated tRNA L-seryl-tRNA(Sec), which will be further converted into selenocysteinyl-tRNA(Sec). This is Serine--tRNA ligase from Shewanella halifaxensis (strain HAW-EB4).